The following is a 581-amino-acid chain: Threonine--tRNA ligase (581 aa).

The catalytic stretch occupies residues 185 to 478; it reads DHRKLGKELD…LVEHYGGAFP (294 aa). 3 residues coordinate Zn(2+): C278, H329, and H455.

It belongs to the class-II aminoacyl-tRNA synthetase family. Homodimer. Requires Zn(2+) as cofactor.

It localises to the cytoplasm. The enzyme catalyses tRNA(Thr) + L-threonine + ATP = L-threonyl-tRNA(Thr) + AMP + diphosphate + H(+). In terms of biological role, catalyzes the attachment of threonine to tRNA(Thr) in a two-step reaction: L-threonine is first activated by ATP to form Thr-AMP and then transferred to the acceptor end of tRNA(Thr). Also edits incorrectly charged L-seryl-tRNA(Thr). This chain is Threonine--tRNA ligase, found in Borreliella burgdorferi (strain ATCC 35210 / DSM 4680 / CIP 102532 / B31) (Borrelia burgdorferi).